Consider the following 500-residue polypeptide: Glutelin type-B 5 (500 aa).

A signal peptide spans 1–24; it reads MATIAFSRLSIYFCVLLLCHGSMA. Intrachain disulfides connect C45/C78 and C121/C310. 2 Cupin type-1 domains span residues 50–245 and 316–465; these read LQAF…LVAK and LNIE…EQAR.

This sequence belongs to the 11S seed storage protein (globulins) family. In terms of assembly, hexamer; each subunit is composed of an acidic and a basic chain derived from a single precursor and linked by a disulfide bond.

Its function is as follows. Seed storage protein. The protein is Glutelin type-B 5 (GLUB5) of Oryza sativa subsp. japonica (Rice).